An 86-amino-acid chain; its full sequence is MTIELRKIAILPIRFYQRFISPLFPPSCRFVPTCSAYAAEAVLRHGIIKGGFLALRRILRCNPLCAGGYDPVPESRHQDAKRVRSC.

Belongs to the UPF0161 family.

The protein resides in the cell inner membrane. Functionally, could be involved in insertion of integral membrane proteins into the membrane. The protein is Putative membrane protein insertion efficiency factor of Oleidesulfovibrio alaskensis (strain ATCC BAA-1058 / DSM 17464 / G20) (Desulfovibrio alaskensis).